Here is a 945-residue protein sequence, read N- to C-terminus: Isoleucine--tRNA ligase (945 aa).

The 'HIGH' region motif lies at 66 to 76 (PYANGDIHLGH). Glu-581 is a binding site for L-isoleucyl-5'-AMP. The 'KMSKS' region motif lies at 622-626 (KMSKS). An ATP-binding site is contributed by Lys-625. Cys-908, Cys-911, Cys-928, and Cys-931 together coordinate Zn(2+).

It belongs to the class-I aminoacyl-tRNA synthetase family. IleS type 1 subfamily. Monomer. Zn(2+) serves as cofactor.

The protein resides in the cytoplasm. The catalysed reaction is tRNA(Ile) + L-isoleucine + ATP = L-isoleucyl-tRNA(Ile) + AMP + diphosphate. Its function is as follows. Catalyzes the attachment of isoleucine to tRNA(Ile). As IleRS can inadvertently accommodate and process structurally similar amino acids such as valine, to avoid such errors it has two additional distinct tRNA(Ile)-dependent editing activities. One activity is designated as 'pretransfer' editing and involves the hydrolysis of activated Val-AMP. The other activity is designated 'posttransfer' editing and involves deacylation of mischarged Val-tRNA(Ile). The chain is Isoleucine--tRNA ligase from Burkholderia ambifaria (strain MC40-6).